The primary structure comprises 208 residues: uncharacterized protein (208 aa).

Helical transmembrane passes span 5–25, 41–61, 69–89, 123–143, 150–170, and 176–196; these read VIGI…KEAW, MLLI…IAAL, ANGI…LFFL, VLLG…ICGL, VFFF…TIAG, and NKLL…LVIY.

The protein localises to the cell membrane. This is an uncharacterized protein from Bacillus subtilis (strain 168).